Reading from the N-terminus, the 238-residue chain is Probable transcriptional regulatory protein SUB0364 (238 aa).

This sequence belongs to the TACO1 family. YeeN subfamily.

The protein resides in the cytoplasm. The chain is Probable transcriptional regulatory protein SUB0364 from Streptococcus uberis (strain ATCC BAA-854 / 0140J).